The following is a 468-amino-acid chain: H(+)/Cl(-) exchange transporter ClcA (468 aa).

Over 1 to 30 (MSTRETFKISLLAKMPKDVINQFLSKDKTP) the chain is Cytoplasmic. A helical transmembrane segment spans residues 31-67 (FSVLFLSLLVGILAGLVGTYFEQAVHLVSETRTDWLK). Residues 68–74 (SEIGSFL) are Periplasmic-facing. The chain crosses the membrane as a helical span at residues 75-98 (PLWLAAFLISAFLAFIGYFLVHRF). The Selectivity filter part_1 signature appears at 104–108 (GSGIP). Ser105 lines the chloride pocket. An intramembrane region (helical) is located at residues 107–114 (IPEIEGAM). The Cytoplasmic portion of the chain corresponds to 115–121 (DGMRPVR). The next 2 membrane-spanning stretches (helical) occupy residues 122–139 (WWRVLPVKFFGGMGALGS) and 146–164 (EGPTVQMGGAVGRMISDIF). Residues 144–148 (GREGP) carry the Selectivity filter part_2 motif. Residues 165-174 (RVKNEDTRHS) lie on the Cytoplasmic side of the membrane. Intramembrane regions (helical) lie at residues 175 to 187 (LLAAGAAGGLAAA) and 191 to 199 (PLAGIMFVI). The Cytoplasmic portion of the chain corresponds to 200–212 (EEMRPQFRYTLIS). The chain crosses the membrane as a helical span at residues 213-230 (VRAVIISAVAANIVFRVI). At 231 to 250 (NGQDAVITMPQYDAPELSTL) the chain is on the periplasmic side. The chain crosses the membrane as a helical span at residues 251-279 (GLFLLLGALFGVFGVLFNYLITLAQDLFV). Residues 280-285 (KFHRND) are Cytoplasmic-facing. The chain crosses the membrane as a helical span at residues 286-307 (RKRYLLTGSMIGGCFGLLLLYV). The Periplasmic portion of the chain corresponds to 308-327 (PELTGGGISLIPTITNGGYG). Helical transmembrane passes span 328-347 (AGILLLLFVGRIFTTLLCFG) and 353-374 (GIFAPMLALGTLFGYAFGLIAK). Residues 353-357 (GIFAP) carry the Selectivity filter part_3 motif. Positions 354 and 355 each coordinate chloride. Topologically, residues 375-384 (MWFPELNIEP) are periplasmic. An intramembrane region (helical) is located at residues 385-399 (GMFAIAGMGALFAAT). Positions 400–402 (VRA) form an intramembrane region, note=Loop between two helices. Positions 403–414 (PITGILLVIEMT) form an intramembrane region, helical. An intramembrane region (note=Loop between two helices) is located at residues 415-419 (NNYHL). Residues 420-436 (ILPLIITSLGAVIFAQL) form a helical membrane-spanning segment. Over 437–468 (LGGQPIYSQLLHRTLKNQKLQQQDLPPQSPNS) the chain is Cytoplasmic. Tyr443 lines the chloride pocket.

Belongs to the chloride channel (TC 2.A.49) family. ClcA subfamily. In terms of assembly, homodimer.

Its subcellular location is the cell inner membrane. It carries out the reaction 2 chloride(in) + H(+)(out) = 2 chloride(out) + H(+)(in). In terms of biological role, proton-coupled chloride transporter. Functions as antiport system and exchanges two chloride ions for 1 proton. Probably acts as an electrical shunt for an outwardly-directed proton pump that is linked to amino acid decarboxylation, as part of the extreme acid resistance (XAR) response. The sequence is that of H(+)/Cl(-) exchange transporter ClcA from Vibrio cholerae serotype O1 (strain ATCC 39315 / El Tor Inaba N16961).